The primary structure comprises 356 residues: MTERRIIHIDMDYFFAQVEMRDNPKLKGKPVIVGGKASSRGVVSTASYEARKYGVHSAMPMSQAHKLCPNGYFVTSNFGAYRETSAQIMSIFRSYTDKVEPMSLDEAYLDITELVRPDLPASKIAQYIRKDILEQTHLTASAGVSYNKFLAKLASGMNKPDGMTVIDYQNVHDILMTLDIGDFPGVGKASKKVMHDNGIFNGRDLYEKTEFELIRLFGKRGRGLYNKARGIDHSEVKSSRVRKSVGTERTFATDVNDDEEILRKVWELSGKTAERLNKLQKSAKTVTVKIKTYQFETLSKQMSLRDSVSSEEDIYNIAYLLYNDLKDPDVPIRLIGVTVGNLEQSTYKNMTIYDFI.

Positions 6–187 (IIHIDMDYFF…LDIGDFPGVG (182 aa)) constitute a UmuC domain. D10 and D105 together coordinate Mg(2+). Residue E106 is part of the active site.

This sequence belongs to the DNA polymerase type-Y family. As to quaternary structure, monomer. The cofactor is Mg(2+).

It localises to the cytoplasm. The catalysed reaction is DNA(n) + a 2'-deoxyribonucleoside 5'-triphosphate = DNA(n+1) + diphosphate. Poorly processive, error-prone DNA polymerase involved in untargeted mutagenesis. Copies undamaged DNA at stalled replication forks, which arise in vivo from mismatched or misaligned primer ends. These misaligned primers can be extended by PolIV. Exhibits no 3'-5' exonuclease (proofreading) activity. May be involved in translesional synthesis, in conjunction with the beta clamp from PolIII. This is DNA polymerase IV from Staphylococcus aureus (strain COL).